Here is a 391-residue protein sequence, read N- to C-terminus: Protein CapJ (391 aa).

Its pathway is capsule biogenesis; capsule polysaccharide biosynthesis. Functionally, required for the biosynthesis of type 1 capsular polysaccharide. The sequence is that of Protein CapJ (capJ) from Staphylococcus aureus.